The chain runs to 358 residues: Peroxidase 54 (358 aa).

The first 31 residues, 1–31 (MAVTSSSSTCDGFFIISLIVIVSSLFGTSSA), serve as a signal peptide directing secretion. Pyrrolidone carboxylic acid is present on Gln32. N-linked (GlcNAc...) asparagine glycans are attached at residues Asn34 and Asn44. 4 cysteine pairs are disulfide-bonded: Cys42–Cys122, Cys75–Cys80, Cys128–Cys330, and Cys207–Cys239. The active-site Proton acceptor is His73. Residues Asp74, Val77, Gly79, Asp81, and Ser83 each contribute to the Ca(2+) site. Asn103, Asn161, and Asn166 each carry an N-linked (GlcNAc...) asparagine glycan. Pro170 is a binding site for substrate. The N-linked (GlcNAc...) asparagine glycan is linked to Asn178. His200 lines the heme b pocket. A Ca(2+)-binding site is contributed by Thr201. 3 N-linked (GlcNAc...) asparagine glycosylation sites follow: Asn218, Asn228, and Asn242. The Ca(2+) site is built by Asp252, Thr255, and Asp260. Asn298 is a glycosylation site (N-linked (GlcNAc...) asparagine).

This sequence belongs to the peroxidase family. Classical plant (class III) peroxidase subfamily. It depends on heme b as a cofactor. Ca(2+) is required as a cofactor.

It localises to the secreted. It is found in the vacuole. It catalyses the reaction 2 a phenolic donor + H2O2 = 2 a phenolic radical donor + 2 H2O. Its function is as follows. Removal of H(2)O(2), oxidation of toxic reductants, biosynthesis and degradation of lignin, suberization, auxin catabolism, response to environmental stresses such as wounding, pathogen attack and oxidative stress. These functions might be dependent on each isozyme/isoform in each plant tissue. This is Peroxidase 54 (PER54) from Arabidopsis thaliana (Mouse-ear cress).